The sequence spans 80 residues: Kappa-actitoxin-Avd4f (80 aa).

The first 19 residues, 1 to 19 (MNKALFLCLVVLCAAVVFA), serve as a signal peptide directing secretion. Residues 20 to 31 (AEDLQKAKHAPF) constitute a propeptide that is removed on maturation. 3 disulfides stabilise this stretch: cysteine 41–cysteine 76, cysteine 43–cysteine 69, and cysteine 59–cysteine 77.

Belongs to the sea anemone type 3 (BDS) potassium channel toxin family. As to expression, moderately expressed in the ectodermal tissue from the distal and proximal tentacles, body wall, and oral disk.

It localises to the secreted. The protein localises to the nematocyst. Its function is as follows. Blocks Kv3 voltage-gated potassium channels. Reduces blood pressure. The sequence is that of Kappa-actitoxin-Avd4f from Anemonia viridis (Snakelocks anemone).